The primary structure comprises 200 residues: Small ribosomal subunit protein uS4 (200 aa).

The tract at residues 22-43 (TGKELERRPYAPGQHGPTQRKK) is disordered. Positions 92 to 170 (QRLDNIVYRL…VPEYVTFDAE (79 aa)) constitute an S4 RNA-binding domain.

Belongs to the universal ribosomal protein uS4 family. As to quaternary structure, part of the 30S ribosomal subunit. Contacts protein S5. The interaction surface between S4 and S5 is involved in control of translational fidelity.

In terms of biological role, one of the primary rRNA binding proteins, it binds directly to 16S rRNA where it nucleates assembly of the body of the 30S subunit. With S5 and S12 plays an important role in translational accuracy. The polypeptide is Small ribosomal subunit protein uS4 (Listeria innocua serovar 6a (strain ATCC BAA-680 / CLIP 11262)).